The following is a 229-amino-acid chain: 1-(5-phosphoribosyl)-5-[(5-phosphoribosylamino)methylideneamino] imidazole-4-carboxamide isomerase (229 aa).

The active-site Proton acceptor is the D8. The active-site Proton donor is the D125.

This sequence belongs to the HisA/HisF family.

Its subcellular location is the cytoplasm. It carries out the reaction 1-(5-phospho-beta-D-ribosyl)-5-[(5-phospho-beta-D-ribosylamino)methylideneamino]imidazole-4-carboxamide = 5-[(5-phospho-1-deoxy-D-ribulos-1-ylimino)methylamino]-1-(5-phospho-beta-D-ribosyl)imidazole-4-carboxamide. Its pathway is amino-acid biosynthesis; L-histidine biosynthesis; L-histidine from 5-phospho-alpha-D-ribose 1-diphosphate: step 4/9. This is 1-(5-phosphoribosyl)-5-[(5-phosphoribosylamino)methylideneamino] imidazole-4-carboxamide isomerase from Thermococcus onnurineus (strain NA1).